The chain runs to 376 residues: MREEPSSAQLFKPLKVGRCHLQHRMIMAPTTRFRADGQGVPLPFVQEYYGQRASVPGTLLITEATDITPKAMGYKHVPGIWSEPQREAWREIVSRVHSKKCFIFCQLWATGRAADPDVLADMKDLISSSAVPVEEKGPLPRALTEDEIQQCIADFAQAARNAINAGFDGVEIHGANGYLIDQFTQKSCNHRQDRWGGSIENRARFAVEVTRAVIEAVGADRVGVKLSPYSQYLGMGTMDELVPQFEYLIAQMRRLDVAYLHLANSRWLDEEKPHPDPNHEVFVRVWGQSSPILLAGGYDAASAEKVTEQMAAATYTNVAIAFGRYFISTPDLPFRVMAGIQLQKYDRASFYSTLSREGYLDYPFSAEYMALHNFPV.

Residues 29-31, alanine 64, glutamine 106, and histidine 173 contribute to the FMN site; that span reads PTT. Substrate is bound by residues histidine 173 and asparagine 176. The active-site Proton donor is tyrosine 178. FMN is bound by residues lysine 225, glycine 297, 323-324, and arginine 324; that span reads GR. Residue tyrosine 351 participates in substrate binding.

Belongs to the NADH:flavin oxidoreductase/NADH oxidase family. It depends on FMN as a cofactor.

It carries out the reaction dihydrochanoclavine-I aldehyde + NADP(+) = chanoclavine-I aldehyde + NADPH + H(+). It participates in alkaloid biosynthesis; ergot alkaloid biosynthesis. Aldehyde reductase; part of the gene cluster that mediates the biosynthesis of fumiclavanine C, a fungal ergot alkaloid. DmaW catalyzes the first step of ergot alkaloid biosynthesis by condensing dimethylallyl diphosphate (DMAP) and tryptophan to form 4-dimethylallyl-L-tryptophan. The second step is catalyzed by the methyltransferase easF that methylates 4-dimethylallyl-L-tryptophan in the presence of S-adenosyl-L-methionine, resulting in the formation of 4-dimethylallyl-L-abrine. The catalase easC and the FAD-dependent oxidoreductase easE then transform 4-dimethylallyl-L-abrine to chanoclavine-I which is further oxidized by EasD in the presence of NAD(+), resulting in the formation of chanoclavine-I aldehyde. EasA reduces chanoclavine-I aldehyde to dihydrochanoclavine-I aldehyde that spontaneously dehydrates to form 6,8-dimethyl-6,7-didehydroergoline. EasG then catalyzes the reduction of 6,8-dimethyl-6,7-didehydroergoline to form festuclavine. Hydrolysis of festuclavine by easM then leads to the formation of fumigaclavine B which is in turn acetylated by easN to fumigaclavine A. Finally, easL catalyzes the conversion of fumigaclavine A into fumigaclavine C by attaching a dimethylallyl moiety to C-2 of the indole nucleus. The chain is Chanoclavine-I aldehyde reductase easA from Aspergillus fumigatus (strain ATCC MYA-4609 / CBS 101355 / FGSC A1100 / Af293) (Neosartorya fumigata).